Consider the following 479-residue polypeptide: MNFETIIGLEVHVELNTNSKIFSPSSAHFGEDPNANTNVIDWSFPGVLPVMNKGVIDAGIKAALALNMDIHKEMHFDRKNYFYPDNPKAYQISQFDEPIGYNGWIKIKLEDGSTKKIRIERAHLEEDAGKNTHGTDGYSYVDLNRQGVPLIEIVSEADMRSPEEAYAYLTALKEIIQYTGISDVKMEEGSMRVDANISLRPYGQEQFGTKTELKNLNSFSNVRKGLEFEVERQAKLLRSGGVIRQETRRYDEANKGTILMRVKEGAADYRYFPEPDLPLYEIDDAWIDEMRAQLPQFPAQRRAKYEEELGLSAYDASQLTATKVLSDYFETAVSLGGDAKQVSNWLQGEVAQFLNAEGKTIEEIALTPENLVEMIAIIADGTISSKMAKKVFVHLAKNGGSARAYVEKAGLVQISDPAVLVPIIHQVFADNEAAVADFKSGKRNADKAFTGFLMKATKGQANPQVAQQLLAQELQKLRD.

This sequence belongs to the GatB/GatE family. GatB subfamily. In terms of assembly, heterotrimer of A, B and C subunits.

It catalyses the reaction L-glutamyl-tRNA(Gln) + L-glutamine + ATP + H2O = L-glutaminyl-tRNA(Gln) + L-glutamate + ADP + phosphate + H(+). It carries out the reaction L-aspartyl-tRNA(Asn) + L-glutamine + ATP + H2O = L-asparaginyl-tRNA(Asn) + L-glutamate + ADP + phosphate + 2 H(+). Allows the formation of correctly charged Asn-tRNA(Asn) or Gln-tRNA(Gln) through the transamidation of misacylated Asp-tRNA(Asn) or Glu-tRNA(Gln) in organisms which lack either or both of asparaginyl-tRNA or glutaminyl-tRNA synthetases. The reaction takes place in the presence of glutamine and ATP through an activated phospho-Asp-tRNA(Asn) or phospho-Glu-tRNA(Gln). This Streptococcus pyogenes serotype M12 (strain MGAS2096) protein is Aspartyl/glutamyl-tRNA(Asn/Gln) amidotransferase subunit B.